The chain runs to 254 residues: Adenosine 5'-phosphosulfate reductase (254 aa).

[4Fe-4S] cluster-binding residues include Cys-131, Cys-132, Cys-212, and Cys-215. The active-site Nucleophile; cysteine thiosulfonate intermediate is the Cys-238.

This sequence belongs to the PAPS reductase family. CysH subfamily. The cofactor is [4Fe-4S] cluster.

Its subcellular location is the cytoplasm. It carries out the reaction [thioredoxin]-disulfide + sulfite + AMP + 2 H(+) = adenosine 5'-phosphosulfate + [thioredoxin]-dithiol. It participates in sulfur metabolism; hydrogen sulfide biosynthesis; sulfite from sulfate. Its function is as follows. Catalyzes the formation of sulfite from adenosine 5'-phosphosulfate (APS) using thioredoxin as an electron donor. This is Adenosine 5'-phosphosulfate reductase from Mesorhizobium japonicum (strain LMG 29417 / CECT 9101 / MAFF 303099) (Mesorhizobium loti (strain MAFF 303099)).